Here is a 442-residue protein sequence, read N- to C-terminus: 3-dehydroquinate synthase, chloroplastic (442 aa).

Residues 1 to 58 (MAANTISLSNVAASKNLNSFQSRAFIAPPTIFFPVASAKSKPGELSLSSTTLSRSRVR) constitute a chloroplast transit peptide. Ala-59 is modified (N-acetylalanine). Residues Asn-119, 150–152 (DGE), Lys-155, 183–188 (GGVIGD), 208–209 (TT), Lys-221, Lys-230, and 248–251 (TLNT) each bind NAD(+). Glu-263 is an a divalent metal cation binding site. An NAD(+)-binding site is contributed by Lys-305. Residues His-326 and His-343 each coordinate a divalent metal cation.

Belongs to the sugar phosphate cyclases superfamily. Dehydroquinate synthase family. Homodimer. Requires a divalent metal cation as cofactor. The cofactor is NAD(+).

The protein resides in the plastid. It is found in the chloroplast. The enzyme catalyses 7-phospho-2-dehydro-3-deoxy-D-arabino-heptonate = 3-dehydroquinate + phosphate. The protein operates within metabolic intermediate biosynthesis; chorismate biosynthesis; chorismate from D-erythrose 4-phosphate and phosphoenolpyruvate: step 2/7. Functionally, catalyzes the second step in the shikimate pathway. The chain is 3-dehydroquinate synthase, chloroplastic (DHQS) from Arabidopsis thaliana (Mouse-ear cress).